The sequence spans 60 residues: Metallothionein B (60 aa).

The interval 1 to 28 (MDPCECSKTGSCNCGGSCKCSNCACTSC) is beta. Positions 4, 6, 12, 14, 18, 20, 23, 25, 28, 32, 33, 35, 36, 40, 43, 47, 49, 54, 58, and 59 each coordinate a divalent metal cation. The tract at residues 29-60 (KKSCCPCCPSDCSKCASGCVCKGKTCDTSCCQ) is alpha.

It belongs to the metallothionein superfamily. Type 1 family.

Metallothioneins have a high content of cysteine residues that bind various heavy metals. The chain is Metallothionein B (mtb) from Oncorhynchus mykiss (Rainbow trout).